Consider the following 305-residue polypeptide: Glycerol-3-phosphate dehydrogenase [NAD(P)+] (305 aa).

NADPH-binding residues include Trp11, Arg31, and Lys79. 2 residues coordinate sn-glycerol 3-phosphate: Lys79 and Gly107. Position 111 (Ala111) interacts with NADPH. Sn-glycerol 3-phosphate is bound by residues Lys162, Asp215, Ser225, Arg226, and Asn227. The active-site Proton acceptor is the Lys162. Arg226 is an NADPH binding site. Residue Glu252 participates in NADPH binding.

The protein belongs to the NAD-dependent glycerol-3-phosphate dehydrogenase family.

It localises to the cytoplasm. It catalyses the reaction sn-glycerol 3-phosphate + NAD(+) = dihydroxyacetone phosphate + NADH + H(+). It carries out the reaction sn-glycerol 3-phosphate + NADP(+) = dihydroxyacetone phosphate + NADPH + H(+). It functions in the pathway membrane lipid metabolism; glycerophospholipid metabolism. In terms of biological role, catalyzes the reduction of the glycolytic intermediate dihydroxyacetone phosphate (DHAP) to sn-glycerol 3-phosphate (G3P), the key precursor for phospholipid synthesis. This Gloeobacter violaceus (strain ATCC 29082 / PCC 7421) protein is Glycerol-3-phosphate dehydrogenase [NAD(P)+].